The chain runs to 319 residues: ATP-dependent 6-phosphofructokinase (319 aa).

Position 11 (Gly-11) interacts with ATP. 21 to 25 (RAAVR) serves as a coordination point for ADP. ATP-binding positions include 72 to 73 (RS) and 102 to 105 (GDGS). Asp-103 contacts Mg(2+). 125–127 (TID) provides a ligand contact to substrate. The active-site Proton acceptor is Asp-127. Arg-154 serves as a coordination point for ADP. Residues Arg-162 and 169–171 (MGR) contribute to the substrate site. Residues 185 to 187 (GAE), Arg-211, and 213 to 215 (KKH) contribute to the ADP site. Residues Glu-222, Arg-243, and 249–252 (HIQR) each bind substrate.

The protein belongs to the phosphofructokinase type A (PFKA) family. ATP-dependent PFK group I subfamily. Prokaryotic clade 'B1' sub-subfamily. Homotetramer. The cofactor is Mg(2+).

The protein resides in the cytoplasm. It carries out the reaction beta-D-fructose 6-phosphate + ATP = beta-D-fructose 1,6-bisphosphate + ADP + H(+). It functions in the pathway carbohydrate degradation; glycolysis; D-glyceraldehyde 3-phosphate and glycerone phosphate from D-glucose: step 3/4. Allosterically activated by ADP and other diphosphonucleosides, and allosterically inhibited by phosphoenolpyruvate. In terms of biological role, catalyzes the phosphorylation of D-fructose 6-phosphate to fructose 1,6-bisphosphate by ATP, the first committing step of glycolysis. In Brevibacillus brevis (strain 47 / JCM 6285 / NBRC 100599), this protein is ATP-dependent 6-phosphofructokinase.